Reading from the N-terminus, the 203-residue chain is Glycerol-3-phosphate acyltransferase (203 aa).

The next 4 helical transmembrane spans lie at 6 to 26 (LTLL…AVLV), 82 to 102 (AISL…PIFF), 118 to 138 (APIG…LLLI), and 141 to 161 (YSSL…WWLD).

This sequence belongs to the PlsY family. In terms of assembly, probably interacts with PlsX.

It is found in the cell inner membrane. The enzyme catalyses an acyl phosphate + sn-glycerol 3-phosphate = a 1-acyl-sn-glycero-3-phosphate + phosphate. Its pathway is lipid metabolism; phospholipid metabolism. Functionally, catalyzes the transfer of an acyl group from acyl-phosphate (acyl-PO(4)) to glycerol-3-phosphate (G3P) to form lysophosphatidic acid (LPA). This enzyme utilizes acyl-phosphate as fatty acyl donor, but not acyl-CoA or acyl-ACP. This chain is Glycerol-3-phosphate acyltransferase, found in Shewanella putrefaciens (strain CN-32 / ATCC BAA-453).